We begin with the raw amino-acid sequence, 533 residues long: DNA-directed RNA polymerase III subunit RPC3 (533 aa).

Residues 162 to 181 are disordered; it reads LVPDTDSSDRGPPPPAPTLV. Position 194 is a phosphoserine (serine 194). The segment at 197–228 is disordered; the sequence is GKGKRRRSSDEDATGEPKAKKPRYTDNKEPSP. Residues 211-227 show a composition bias toward basic and acidic residues; sequence GEPKAKKPRYTDNKEPS.

The protein belongs to the eukaryotic RPC3/POLR3C RNA polymerase subunit family. In terms of assembly, component of the RNA polymerase III complex consisting of 17 subunits: a ten-subunit horseshoe-shaped catalytic core composed of POLR3A/RPC1, POLR3B/RPC2, POLR1C/RPAC1, POLR1D/RPAC2, POLR3K/RPC10, POLR2E/RPABC1, POLR2F/RPABC2, POLR2H/RPABC3, POLR2K/RPABC4 and POLR2L/RPABC5; a mobile stalk composed of two subunits POLR3H/RPC8 and CRCP/RPC9, protruding from the core and functioning primarily in transcription initiation; and additional subunits homologous to general transcription factors of the RNA polymerase II machinery, POLR3C/RPC3-POLR3F/RPC6-POLR3G/RPC7 heterotrimer required for transcription initiation and POLR3D/RPC4-POLR3E/RPC5 heterodimer involved in both transcription initiation and termination. Directly interacts with POLR3G/RPC7 and POLR3GL. Directly interacts with POLR3F/RPC6. Interacts with GTF3C4. As part of the RNA polymerase III complex, interacts with PKP2.

It localises to the nucleus. Its function is as follows. DNA-dependent RNA polymerase catalyzes the transcription of DNA into RNA using the four ribonucleoside triphosphates as substrates. Specific peripheric component of RNA polymerase III (Pol III) which synthesizes small non-coding RNAs including 5S rRNA, snRNAs, tRNAs and miRNAs from at least 500 distinct genomic loci. Part of POLR3C/RPC3-POLR3F/RPC6-POLR3G/RPC7 heterotrimer, coordinates the dynamics of Pol III stalk and clamp modules during the transition from apo to elongation state. Pol III plays a key role in sensing and limiting infection by intracellular bacteria and DNA viruses. Acts as a nuclear and cytosolic DNA sensor involved in innate immune response. Can sense non-self dsDNA that serves as template for transcription into dsRNA. The non-self RNA polymerase III transcripts, such as Epstein-Barr virus-encoded RNAs (EBERs) induce type I interferon and NF-kappa-B through the RIG-I pathway. Preferentially binds single-stranded DNA (ssDNA) in a sequence-independent manner. The protein is DNA-directed RNA polymerase III subunit RPC3 of Mus musculus (Mouse).